A 533-amino-acid polypeptide reads, in one-letter code: MVTITSWKRFKEYLYYDQELGLLLDISRMNFSAEFLRSMAEPMREAYHQLQLLEKGALANPDEGRMVGHYWLRNPDLAPTEEIVQDIKETLKEILDFAEQIHSGRLQGEKGNPFRNILLVGVGGSILGPRFVADALASSRDKMKAFFIDNGDPDGIDRVLSRIGEELPATLCLIISKSGGTIETRNGMLEVRRAYKEAGLSFPDHAVAITQRGSQLDKLSQKEGWLRAFPMWDWVGGRTSLLSAVGLLSLALQGIDVAGLLQGAKDCDGRTRRPDTLDNPGALLALMWYYSTQGQGGKQMVVLPYKDRLELFTKYLQQLIMESLGKEKNLQGETVHQGITVYGNKGSSDQHSYLQQLLEGPDNFFVTFIEVLKDRQGPSTYMEENSTSGEYLQAFLLGTREALTQKGRESLTITVKEVNAYTIGVLIALFERAVSIYALLVGINAYHQPAVEMGKKAAGQAIQLKNNIVEFLKSHPGKKFSVSELALAIQEEEHQEMVFKLLLHLTTNPEHGVNMEPGEPWPESRFFVGGPIS.

Glutamate 322 functions as the Proton donor in the catalytic mechanism. Active-site residues include histidine 351 and lysine 455.

It belongs to the GPI family.

Its subcellular location is the cytoplasm. It catalyses the reaction alpha-D-glucose 6-phosphate = beta-D-fructose 6-phosphate. It functions in the pathway carbohydrate biosynthesis; gluconeogenesis. Its pathway is carbohydrate degradation; glycolysis; D-glyceraldehyde 3-phosphate and glycerone phosphate from D-glucose: step 2/4. Its function is as follows. Catalyzes the reversible isomerization of glucose-6-phosphate to fructose-6-phosphate. The sequence is that of Glucose-6-phosphate isomerase from Desulfitobacterium hafniense (strain Y51).